Reading from the N-terminus, the 288-residue chain is Solute carrier family 25 member 45 (288 aa).

Solcar repeat units follow at residues 1-83 (MPVE…TLLA), 97-191 (PSYT…LCRQ), and 199-286 (PSSA…LLRL). The next 6 helical transmembrane spans lie at 6-26 (FVAG…FDTV), 58-78 (GMSF…GVYS), 102-122 (IFIA…PFDL), 166-186 (GSWA…VTYE), 202-222 (ATVL…ATPF), and 266-286 (SARA…LLRL).

It belongs to the mitochondrial carrier (TC 2.A.29) family. As to expression, widely expressed, with highest levels in testis, liver and kidney and low levels in brain, including cortex, cerebellum, hippocampus and hypothalamus, and heart.

The protein localises to the mitochondrion inner membrane. The protein is Solute carrier family 25 member 45 (Slc25a45) of Mus musculus (Mouse).